The primary structure comprises 408 residues: Subtilisin-like protease 6 (408 aa).

A signal peptide spans 1 to 20 (MGFITKAIPIVLAALSTVDG). The propeptide occupies 21-123 (AKILEAGPHA…RDTVVKATAI (103 aa)). The Inhibitor I9 domain occupies 36 to 119 (KYIVVMKQDV…DFIERDTVVK (84 aa)). Positions 131–408 (SWGLARVGSK…GKLIYNGSGK (278 aa)) constitute a Peptidase S8 domain. Residues Asp-163 and His-194 each act as charge relay system in the active site. 3 N-linked (GlcNAc...) asparagine glycosylation sites follow: Asn-248, Asn-260, and Asn-345. Ser-354 (charge relay system) is an active-site residue. Asn-404 carries an N-linked (GlcNAc...) asparagine glycan.

Belongs to the peptidase S8 family.

The protein localises to the secreted. Its function is as follows. Secreted subtilisin-like serine protease with keratinolytic activity that contributes to pathogenicity. This is Subtilisin-like protease 6 (SUB6) from Arthroderma gypseum (strain ATCC MYA-4604 / CBS 118893) (Microsporum gypseum).